The sequence spans 416 residues: Phakinin (416 aa).

Positions 1-48 (MSERRVAMDLPSGSNASMPLQRHRVSSLRGTRSPSSLDSPPASRTSAV) are disordered. S2 carries the post-translational modification N-acetylserine. The tract at residues 2 to 115 (SERRVAMDLP…HATAEDLGGC (114 aa)) is head. Residues S27, S33, S36, and S91 each carry the phosphoserine modification. The segment covering 28–48 (LRGTRSPSSLDSPPASRTSAV) has biased composition (polar residues). The 312-residue stretch at 105–416 (NHATAEDLGG…HALLDREESN (312 aa)) folds into the IF rod domain. 2 coiled-coil regions span residues 199–240 (FRKA…SLSR) and 314–391 (LAAA…ERAH). Residues 397–416 (GQLQKDVASYHALLDREESN) are tail.

The protein belongs to the intermediate filament family. In terms of assembly, part of a complex required for lens intermediate filament formation composed of BFSP1, BFSP2, and CRYAA. Found in a complex composed of PPL (via C-terminal linker domain), BFSP1 and BFSP2 in the retinal lens. Within the complex interacts with PPL (via C-terminal linker domain) and with BFSP1. Identified in a complex that contains VIM, EZR, AHNAK, BFSP1, BFSP2, ANK2, PLEC, PRX and spectrin. Interacts with LGSN. Interacts with VIM. Expressed in the deep and shallow cortices of the retina lens (at protein level).

The protein resides in the cell membrane. It localises to the cytoplasm. Its subcellular location is the cytoskeleton. It is found in the cell cortex. Required for the correct formation of lens intermediate filaments as part of a complex composed of BFSP1, BFSP2 and CRYAA. Plays a role in maintenance of retinal lens optical clarity. In Rattus norvegicus (Rat), this protein is Phakinin.